Here is a 431-residue protein sequence, read N- to C-terminus: uncharacterized protein (431 aa).

3 disordered regions span residues 31–55 (VPAS…QAGV), 257–291 (QNGG…PKQD), and 365–431 (FQSP…HRKA). Polar residues predominate over residues 42–55 (VSASQPNGAHQAGV). A compositionally biased stretch (basic and acidic residues) spans 412 to 425 (VEYRRGRSLRESRE).

This is an uncharacterized protein from Arabidopsis thaliana (Mouse-ear cress).